A 104-amino-acid polypeptide reads, in one-letter code: Large ribosomal subunit protein uL24 (104 aa).

Belongs to the universal ribosomal protein uL24 family. Part of the 50S ribosomal subunit.

One of two assembly initiator proteins, it binds directly to the 5'-end of the 23S rRNA, where it nucleates assembly of the 50S subunit. Its function is as follows. One of the proteins that surrounds the polypeptide exit tunnel on the outside of the subunit. This chain is Large ribosomal subunit protein uL24, found in Enterobacter sp. (strain 638).